A 229-amino-acid chain; its full sequence is ATP synthase subunit a 3 (229 aa).

6 helical membrane passes run 25–45 (ADAV…SFLA), 86–106 (VATI…PGFF), 111–131 (NINT…VVGI), 142–162 (FCGP…IGHL), 181–201 (LVLI…MMLM), and 202–222 (GVLV…IYIQ).

This sequence belongs to the ATPase A chain family. As to quaternary structure, F-type ATPases have 2 components, CF(1) - the catalytic core - and CF(0) - the membrane proton channel. CF(1) has five subunits: alpha(3), beta(3), gamma(1), delta(1), epsilon(1). CF(0) has three main subunits: a(1), b(2) and c(9-12). The alpha and beta chains form an alternating ring which encloses part of the gamma chain. CF(1) is attached to CF(0) by a central stalk formed by the gamma and epsilon chains, while a peripheral stalk is formed by the delta and b chains.

The protein resides in the cell inner membrane. In terms of biological role, key component of the proton channel; it plays a direct role in the translocation of protons across the membrane. The chain is ATP synthase subunit a 3 from Pelobacter propionicus (strain DSM 2379 / NBRC 103807 / OttBd1).